The following is a 433-amino-acid chain: Enolase (433 aa).

Residue Gln167 coordinates (2R)-2-phosphoglycerate. Catalysis depends on Glu209, which acts as the Proton donor. Mg(2+) contacts are provided by Asp246, Glu291, and Asp318. (2R)-2-phosphoglycerate is bound by residues Lys343, Arg372, Ser373, and Lys394. Lys343 serves as the catalytic Proton acceptor.

Belongs to the enolase family. In terms of assembly, component of the RNA degradosome, a multiprotein complex involved in RNA processing and mRNA degradation. Requires Mg(2+) as cofactor.

It is found in the cytoplasm. The protein resides in the secreted. It localises to the cell surface. It carries out the reaction (2R)-2-phosphoglycerate = phosphoenolpyruvate + H2O. It participates in carbohydrate degradation; glycolysis; pyruvate from D-glyceraldehyde 3-phosphate: step 4/5. In terms of biological role, catalyzes the reversible conversion of 2-phosphoglycerate (2-PG) into phosphoenolpyruvate (PEP). It is essential for the degradation of carbohydrates via glycolysis. The chain is Enolase from Edwardsiella ictaluri (strain 93-146).